Here is a 317-residue protein sequence, read N- to C-terminus: Gamma-glutamyl hydrolase (317 aa).

Positions methionine 1–serine 24 are cleaved as a signal peptide. Residues arginine 25 to aspartate 317 form the Gamma-glutamyl hydrolase domain. Asparagine 100 carries N-linked (GlcNAc...) (high mannose) asparagine glycosylation. The active-site Nucleophile is cysteine 133. N-linked (GlcNAc...) (high mannose) asparagine glycosylation is found at asparagine 162 and asparagine 188. Asparagine 202 carries an N-linked (GlcNAc...) asparagine glycan. The active-site Proton donor is the histidine 243. N-linked (GlcNAc...) asparagine glycosylation occurs at asparagine 306.

This sequence belongs to the peptidase C26 family. Homodimer. Isoform I (more expressed than isoform II in all tissues) is highly expressed in salivary gland, followed by kidney, liver, lung, stomach and uterus, and weakly expressed in small intestine, brain and fetal liver. Also expressed at a lower level in thymus, spleen and skeletal muscle. Also expressed in tumors.

The protein resides in the secreted. The protein localises to the extracellular space. It localises to the lysosome. Its subcellular location is the melanosome. The catalysed reaction is (6S)-5,6,7,8-tetrahydrofolyl-(gamma-L-Glu)(n) + (n-1) H2O = (6S)-5,6,7,8-tetrahydrofolate + (n-1) L-glutamate. Hydrolyzes the polyglutamate sidechains of pteroylpolyglutamates. Progressively removes gamma-glutamyl residues from pteroylpoly-gamma-glutamate to yield pteroyl-alpha-glutamate (folic acid) and free glutamate. May play an important role in the bioavailability of dietary pteroylpolyglutamates and in the metabolism of pteroylpolyglutamates and antifolates. The chain is Gamma-glutamyl hydrolase (Ggh) from Mus musculus (Mouse).